The sequence spans 340 residues: Glyceraldehyde-3-phosphate dehydrogenase (340 aa).

Residues 11 to 12 (TI) and G109 contribute to the NAD(+) site. 138-140 (SCN) contacts D-glyceraldehyde 3-phosphate. C139 functions as the Nucleophile in the catalytic mechanism. R167 is an NAD(+) binding site. 193-194 (HA) contacts D-glyceraldehyde 3-phosphate. Q300 provides a ligand contact to NAD(+).

The protein belongs to the glyceraldehyde-3-phosphate dehydrogenase family. Homotetramer.

It localises to the cytoplasm. It catalyses the reaction D-glyceraldehyde 3-phosphate + phosphate + NADP(+) = (2R)-3-phospho-glyceroyl phosphate + NADPH + H(+). The enzyme catalyses D-glyceraldehyde 3-phosphate + phosphate + NAD(+) = (2R)-3-phospho-glyceroyl phosphate + NADH + H(+). The protein operates within carbohydrate degradation; glycolysis; pyruvate from D-glyceraldehyde 3-phosphate: step 1/5. The polypeptide is Glyceraldehyde-3-phosphate dehydrogenase (Saccharolobus islandicus (strain Y.N.15.51 / Yellowstone #2) (Sulfolobus islandicus)).